Here is a 506-residue protein sequence, read N- to C-terminus: Probable lipid II flippase MurJ (506 aa).

13 helical membrane-spanning segments follow: residues 4–24, 86–106, 127–147, 153–173, 181–201, 232–252, 263–283, 308–328, 345–365, 377–397, 405–425, 436–456, and 474–494; these read YVVS…MGFV, TVIT…IIFA, VFGY…FVSV, IFFI…LSIF, IYSA…IPFA, IFGF…ASTL, AVVY…TVIF, ILLL…DYIL, TASV…FGFF, TPFY…VFGI, LALA…FIIL, ILFV…IYFF, and LMAA…VLGI.

This sequence belongs to the MurJ/MviN family.

The protein localises to the cell inner membrane. Its pathway is cell wall biogenesis; peptidoglycan biosynthesis. Involved in peptidoglycan biosynthesis. Transports lipid-linked peptidoglycan precursors from the inner to the outer leaflet of the cytoplasmic membrane. The polypeptide is Probable lipid II flippase MurJ (Borreliella burgdorferi (strain ATCC 35210 / DSM 4680 / CIP 102532 / B31) (Borrelia burgdorferi)).